Consider the following 161-residue polypeptide: Negative cofactor 2 complex subunit beta (161 aa).

Positions 11-75 (SLPKATVQKM…IAAEHIIKAL (65 aa)) constitute a Histone-fold domain. The span at 93–107 (EHKEQQKNREKKSSK) shows a compositional bias: basic and acidic residues. 2 disordered regions span residues 93-116 (EHKE…VSRD) and 130-161 (RERF…TKEN). A compositionally biased stretch (polar residues) spans 135–147 (NQNIAHDNHTTTA).

It belongs to the NC2 beta/DR1 family.

Its subcellular location is the cytoplasm. The protein localises to the nucleus. In Schizosaccharomyces pombe (strain 972 / ATCC 24843) (Fission yeast), this protein is Negative cofactor 2 complex subunit beta (ncb2).